Reading from the N-terminus, the 241-residue chain is Pyridoxine 5'-phosphate synthase (241 aa).

Asn-7 is a 3-amino-2-oxopropyl phosphate binding site. 9–10 (DH) serves as a coordination point for 1-deoxy-D-xylulose 5-phosphate. A 3-amino-2-oxopropyl phosphate-binding site is contributed by Arg-18. The active-site Proton acceptor is the His-43. The 1-deoxy-D-xylulose 5-phosphate site is built by Arg-45 and His-50. Glu-70 acts as the Proton acceptor in catalysis. 1-deoxy-D-xylulose 5-phosphate is bound at residue Thr-100. Catalysis depends on His-191, which acts as the Proton donor. Residues Gly-192 and 213 to 214 (GH) each bind 3-amino-2-oxopropyl phosphate.

This sequence belongs to the PNP synthase family. In terms of assembly, homooctamer; tetramer of dimers.

Its subcellular location is the cytoplasm. The catalysed reaction is 3-amino-2-oxopropyl phosphate + 1-deoxy-D-xylulose 5-phosphate = pyridoxine 5'-phosphate + phosphate + 2 H2O + H(+). It functions in the pathway cofactor biosynthesis; pyridoxine 5'-phosphate biosynthesis; pyridoxine 5'-phosphate from D-erythrose 4-phosphate: step 5/5. Its function is as follows. Catalyzes the complicated ring closure reaction between the two acyclic compounds 1-deoxy-D-xylulose-5-phosphate (DXP) and 3-amino-2-oxopropyl phosphate (1-amino-acetone-3-phosphate or AAP) to form pyridoxine 5'-phosphate (PNP) and inorganic phosphate. In Nitrosospira multiformis (strain ATCC 25196 / NCIMB 11849 / C 71), this protein is Pyridoxine 5'-phosphate synthase.